Here is a 150-residue protein sequence, read N- to C-terminus: Urease accessory protein UreE (150 aa).

This sequence belongs to the UreE family.

The protein localises to the cytoplasm. Involved in urease metallocenter assembly. Binds nickel. Probably functions as a nickel donor during metallocenter assembly. This chain is Urease accessory protein UreE, found in Staphylococcus epidermidis (strain ATCC 35984 / DSM 28319 / BCRC 17069 / CCUG 31568 / BM 3577 / RP62A).